Consider the following 898-residue polypeptide: Chloride channel protein 2 (898 aa).

A2 carries the post-translational modification N-acetylalanine. Topologically, residues 2–87 are cytoplasmic; the sequence is AAAAAEEGME…RCHKFLVSRV (86 aa). The essential for channel gating by both voltage and cell volume stretch occupies residues 16 to 34; sequence QYEQTLMYGRYTQDLGAFA. Position 20 is a phosphothreonine (T20). The tract at residues 36–49 is modulates channel gating by both voltage and cell volume; that stretch reads EEAARIRLGGPEPW. The next 2 helical transmembrane spans lie at 88–121 and 130–155; these read GEDW…AQQW and ILLQ…TQIL. The Selectivity filter part_1 motif lies at 161–165; it reads GSGIP. Position 162 (S162) interacts with chloride. Positions 164–171 form an intramembrane region, helical; that stretch reads IPEMKTIL. 2 consecutive transmembrane segments (helical) span residues 180–198 and 205–223; these read LTLK…ALGS and EGPF…SKFL. Residues 203–207 carry the Selectivity filter part_2 motif; the sequence is GKEGP. 2 intramembrane regions (helical) span residues 239-251 and 255-263; these read MLAA…VGCC and PIGGVLFSI. Helical transmembrane passes span 275–295, 321–349, 358–377, 429–449, and 457–480; these read YWRG…LAVW, LPAF…VQVM, FLMR…ISTL, ANVF…SALA, and GAFM…MAAW. A Selectivity filter part_3 motif is present at residues 457-461; that stretch reads GAFMP. F459 provides a ligand contact to chloride. Residues 497–511 constitute an intramembrane region (helical); it reads GGYAVVGAAALAGAV. Residues 512–513 constitute an intramembrane region (note=Loop between two helices); the sequence is TH. Residues 514 to 525 constitute an intramembrane region (helical); that stretch reads TVSTAVIVFELT. The note=Loop between two helices intramembrane region spans 526 to 530; the sequence is GQIAH. Residues 531-548 traverse the membrane as a helical segment; it reads ILPVMIAVILANAVAQSL. The Cytoplasmic portion of the chain corresponds to 549–898; that stretch reads QPSLYDSIIR…SPSDSDDKCQ (350 aa). Position 553 (Y553) interacts with chloride. The CBS 1 domain maps to 584-642; that stretch reads MVRDVPHVALSCTFRDLRLALHRTKGRMLALVESPESMILLGSIERSQVVALLGAQLSP. 2 disordered regions span residues 643–672 and 686–717; these read ARRR…PEAS and AARG…TGSA. Over residues 705–717 the composition is skewed to polar residues; the sequence is VTRNLGESPTGSA. Phosphoserine occurs at positions 712 and 758. Residues 790 to 850 form the CBS 2 domain; it reads IDPAPFQLVE…GSVTAQGVKV (61 aa). Residues 812-813 carry the Basolateral membrane sorting motif; the sequence is LL. A disordered region spans residues 856 to 898; that stretch reads SFRDSATSSSDTETTEVHALWGPHSRHGLPREGSPSDSDDKCQ.

This sequence belongs to the chloride channel (TC 2.A.49) family. ClC-2/CLCN2 subfamily. In terms of assembly, homodimer. Interacts with auxiliary subunit HEPACAM. In terms of processing, phosphorylated. Activated by dephosphorylation. In terms of tissue distribution, ubiquitously expressed. Moderately expressed in aortic and coronary vascular smooth muscle cells and expressed at a low level in aortic endothelial cells. Expressed in the adrenal gland, predominantly in the zona glomerulosa. Expressed in white mater perivascular astrocytes and ependymal cells (at protein level).

The protein localises to the cell membrane. The protein resides in the basolateral cell membrane. Its subcellular location is the cell projection. It is found in the dendritic spine membrane. It localises to the axon. It carries out the reaction chloride(in) = chloride(out). The enzyme catalyses thiocyanate(in) = thiocyanate(out). The catalysed reaction is bromide(in) = bromide(out). It catalyses the reaction nitrate(in) = nitrate(out). It carries out the reaction iodide(out) = iodide(in). Its activity is regulated as follows. Common gate kinetics are down-regulated by intracellular ATP. Inhibited by AK-42, a derivative of meclofenamate. Inhibited by Cd(2+). Inhibited by Zn(2+) and PKC activation. Inhibited at acidic pH. CCLN2:HEPACAM channel conductance is up-regulated upon hypo-osmolarity. Voltage-gated and osmosensitive chloride channel. Forms a homodimeric channel where each subunit has its own ion conduction pathway. Conducts double-barreled currents controlled by two types of gates, two fast glutamate gates that control each subunit independently and a slow common gate that opens and shuts off both subunits simultaneously. Displays inward rectification currents activated upon membrane hyperpolarization and extracellular hypotonicity. Contributes to chloride conductance involved in neuron excitability. In hippocampal neurons, generates a significant part of resting membrane conductance and provides an additional chloride efflux pathway to prevent chloride accumulation in dendrites upon GABA receptor activation. In glia, associates with the auxiliary subunit HEPACAM/GlialCAM at astrocytic processes and myelinated fiber tracts where it may regulate transcellular chloride flux buffering extracellular chloride and potassium concentrations. Regulates aldosterone production in adrenal glands. The opening of CLCN2 channels at hyperpolarized membrane potentials in the glomerulosa causes cell membrane depolarization, activation of voltage-gated calcium channels and increased expression of aldosterone synthase, the rate-limiting enzyme for aldosterone biosynthesis. Contributes to chloride conductance in retinal pigment epithelium involved in phagocytosis of shed photoreceptor outer segments and photoreceptor renewal. Conducts chloride currents at the basolateral membrane of epithelial cells with a role in chloride reabsorption rather than secretion. Permeable to small monovalent anions with chloride &gt; thiocyanate &gt; bromide &gt; nitrate &gt; iodide ion selectivity. The sequence is that of Chloride channel protein 2 from Homo sapiens (Human).